A 196-amino-acid chain; its full sequence is Imidazoleglycerol-phosphate dehydratase (196 aa).

Belongs to the imidazoleglycerol-phosphate dehydratase family.

Its subcellular location is the cytoplasm. The catalysed reaction is D-erythro-1-(imidazol-4-yl)glycerol 3-phosphate = 3-(imidazol-4-yl)-2-oxopropyl phosphate + H2O. The protein operates within amino-acid biosynthesis; L-histidine biosynthesis; L-histidine from 5-phospho-alpha-D-ribose 1-diphosphate: step 6/9. The polypeptide is Imidazoleglycerol-phosphate dehydratase (Clostridium botulinum (strain Okra / Type B1)).